A 138-amino-acid polypeptide reads, in one-letter code: Histone H2B.8 (138 aa).

Basic and acidic residues predominate over residues 1 to 38 (MAPKAAEKKPAGKKPAEKAPAEKLPKAEKKITKEGGSE). A disordered region spans residues 1 to 45 (MAPKAAEKKPAGKKPAEKAPAEKLPKAEKKITKEGGSEKKKKKSK). The residue at position 2 (Ala2) is a N,N,N-trimethylalanine; alternate. Residue Ala2 is modified to N,N-dimethylalanine; alternate. N-methylalanine; alternate is present on Ala2. Lys4 carries the N6-methyllysine modification. An N6-acetyllysine mark is found at Lys8 and Lys13. Lys14 carries the post-translational modification N6,N6-dimethyllysine. N6-acetyllysine is present on residues Lys18, Lys23, Lys29, and Lys30. Lys134 is covalently cross-linked (Glycyl lysine isopeptide (Lys-Gly) (interchain with G-Cter in ubiquitin)).

The protein belongs to the histone H2B family. As to quaternary structure, the nucleosome is a histone octamer containing two molecules each of H2A, H2B, H3 and H4 assembled in one H3-H4 heterotetramer and two H2A-H2B heterodimers. The octamer wraps approximately 147 bp of DNA. In terms of processing, can be acetylated to form H2BK6ac, H2BK33ac and H2BK34ac. Post-translationally, monoubiquitinated by BRE1 to form H2BK143ub1 and deubiquitinated by UBP26. Required for heterochromatic histone H3 di- and trimethylation at H3K4me. May give a specific tag for epigenetic transcriptional activation.

The protein localises to the nucleus. It is found in the chromosome. Its function is as follows. Core component of nucleosome. Nucleosomes wrap and compact DNA into chromatin, limiting DNA accessibility to the cellular machineries which require DNA as a template. Histones thereby play a central role in transcription regulation, DNA repair, DNA replication and chromosomal stability. DNA accessibility is regulated via a complex set of post-translational modifications of histones, also called histone code, and nucleosome remodeling. The polypeptide is Histone H2B.8 (Arabidopsis thaliana (Mouse-ear cress)).